A 146-amino-acid polypeptide reads, in one-letter code: MSIPEITQTLLQAKKDQGLSFADLEAILGRNEVWIAALFYRQASASEEEAKLLVEALGLDPSYIQHLTEYPIKGLGPIVPTDPLIYRFYEIMQVYGFPIKQVIQEKFGDGIMSAIDFTLDVEKEADPKGDRVKITMSGKFLPYKKW.

Residues R87, E90, and S113 contribute to the active site.

This sequence belongs to the cyanase family.

The enzyme catalyses cyanate + hydrogencarbonate + 3 H(+) = NH4(+) + 2 CO2. In terms of biological role, catalyzes the reaction of cyanate with bicarbonate to produce ammonia and carbon dioxide. The polypeptide is Cyanate hydratase (Trichormus variabilis (strain ATCC 29413 / PCC 7937) (Anabaena variabilis)).